The sequence spans 275 residues: Formamidopyrimidine-DNA glycosylase (275 aa).

P2 functions as the Schiff-base intermediate with DNA in the catalytic mechanism. The Proton donor role is filled by E3. Catalysis depends on K58, which acts as the Proton donor; for beta-elimination activity. DNA-binding residues include H93, R111, and R156. Residues 241–275 (FVYDRAGQPCRVCNTPIRQIVQGQRSTYFCPTCQR) form an FPG-type zinc finger. R265 serves as the catalytic Proton donor; for delta-elimination activity.

This sequence belongs to the FPG family. Monomer. The cofactor is Zn(2+).

The enzyme catalyses Hydrolysis of DNA containing ring-opened 7-methylguanine residues, releasing 2,6-diamino-4-hydroxy-5-(N-methyl)formamidopyrimidine.. It catalyses the reaction 2'-deoxyribonucleotide-(2'-deoxyribose 5'-phosphate)-2'-deoxyribonucleotide-DNA = a 3'-end 2'-deoxyribonucleotide-(2,3-dehydro-2,3-deoxyribose 5'-phosphate)-DNA + a 5'-end 5'-phospho-2'-deoxyribonucleoside-DNA + H(+). In terms of biological role, involved in base excision repair of DNA damaged by oxidation or by mutagenic agents. Acts as a DNA glycosylase that recognizes and removes damaged bases. Has a preference for oxidized purines, such as 7,8-dihydro-8-oxoguanine (8-oxoG). Has AP (apurinic/apyrimidinic) lyase activity and introduces nicks in the DNA strand. Cleaves the DNA backbone by beta-delta elimination to generate a single-strand break at the site of the removed base with both 3'- and 5'-phosphates. The chain is Formamidopyrimidine-DNA glycosylase from Burkholderia lata (strain ATCC 17760 / DSM 23089 / LMG 22485 / NCIMB 9086 / R18194 / 383).